The sequence spans 471 residues: Delta(24(24(1)))-sterol reductase erg4A (471 aa).

N15 carries N-linked (GlcNAc...) asparagine glycosylation. The next 8 membrane-spanning stretches (helical) occupy residues 33–53 (VTLI…GAVL), 89–109 (WTIY…LPGV), 130–150 (AVSS…TGVL), 159–179 (FGPL…VAYI), 216–236 (MFFE…GTAL), 244–264 (LVAG…NACA), 282–302 (GFML…HCTL), and 313–333 (HWNP…YWVW). Residues K340, R344, L380, and 392–393 (HY) each bind NADP(+). The helical transmembrane segment at 397–417 (VFFAISWGLITGFNSPFPWFY) threads the bilayer. Residues D432, 436–440 (CRERY), and Y447 each bind NADP(+).

Belongs to the ERG4/ERG24 family.

It is found in the endoplasmic reticulum membrane. It catalyses the reaction ergosterol + NADP(+) = ergosta-5,7,22,24(28)-tetraen-3beta-ol + NADPH + H(+). Its pathway is steroid metabolism; ergosterol biosynthesis. Its function is as follows. Delta(24(24(1)))-sterol reductase; part of the third module of ergosterol biosynthesis pathway that includes the late steps of the pathway. Catalyzes the last step of ergosterol biosynthesis by converting ergosta-5,7,22,24(28)-tetraen-3beta-ol into ergosterol. The third module or late pathway involves the ergosterol synthesis itself through consecutive reactions that mainly occur in the endoplasmic reticulum (ER) membrane. Firstly, the squalene synthase erg9 catalyzes the condensation of 2 farnesyl pyrophosphate moieties to form squalene, which is the precursor of all steroids. Squalene synthase is crucial for balancing the incorporation of farnesyl diphosphate (FPP) into sterol and nonsterol isoprene synthesis. Secondly, squalene is converted into lanosterol by the consecutive action of the squalene epoxidase erg1 and the lanosterol synthase erg7. Then, the delta(24)-sterol C-methyltransferase erg6 methylates lanosterol at C-24 to produce eburicol. Eburicol is the substrate of the sterol 14-alpha demethylase encoded by cyp51A and cyp51B, to yield 4,4,24-trimethyl ergosta-8,14,24(28)-trienol. The C-14 reductase erg24 then reduces the C14=C15 double bond which leads to 4,4-dimethylfecosterol. A sequence of further demethylations at C-4, involving the C-4 demethylation complex containing the C-4 methylsterol oxidases erg25A or erg25B, the sterol-4-alpha-carboxylate 3-dehydrogenase erg26 and the 3-keto-steroid reductase erg27, leads to the production of fecosterol via 4-methylfecosterol. The C-8 sterol isomerase erg2 then catalyzes the reaction which results in unsaturation at C-7 in the B ring of sterols and thus converts fecosterol to episterol. The sterol-C5-desaturase erg3B then catalyzes the introduction of a C-5 double bond in the B ring to produce 5-dehydroepisterol. The 2 other sterol-C5-desaturases, erg3A and erg3C, seem to be less important in ergosterol biosynthesis. The C-22 sterol desaturase erg5 further converts 5-dehydroepisterol into ergosta-5,7,22,24(28)-tetraen-3beta-ol by forming the C-22(23) double bond in the sterol side chain. Finally, ergosta-5,7,22,24(28)-tetraen-3beta-ol is substrate of the C-24(28) sterol reductases erg4A and erg4B to produce ergosterol. Possible alternative sterol biosynthetic pathways might exist from fecosterol to ergosterol, depending on the activities of the erg3 isoforms. The chain is Delta(24(24(1)))-sterol reductase erg4A from Aspergillus fumigatus (strain ATCC MYA-4609 / CBS 101355 / FGSC A1100 / Af293) (Neosartorya fumigata).